We begin with the raw amino-acid sequence, 357 residues long: Chorismate synthase (357 aa).

The NADP(+) site is built by Arg-48 and Arg-54. FMN contacts are provided by residues 125–127, 238–239, Gly-278, 293–297, and Arg-319; these read RSS, NA, and KPTSS.

This sequence belongs to the chorismate synthase family. As to quaternary structure, homotetramer. Requires FMNH2 as cofactor.

It catalyses the reaction 5-O-(1-carboxyvinyl)-3-phosphoshikimate = chorismate + phosphate. It participates in metabolic intermediate biosynthesis; chorismate biosynthesis; chorismate from D-erythrose 4-phosphate and phosphoenolpyruvate: step 7/7. In terms of biological role, catalyzes the anti-1,4-elimination of the C-3 phosphate and the C-6 proR hydrogen from 5-enolpyruvylshikimate-3-phosphate (EPSP) to yield chorismate, which is the branch point compound that serves as the starting substrate for the three terminal pathways of aromatic amino acid biosynthesis. This reaction introduces a second double bond into the aromatic ring system. The polypeptide is Chorismate synthase (Blochmanniella floridana).